We begin with the raw amino-acid sequence, 345 residues long: NADH-quinone oxidoreductase subunit H (345 aa).

The next 8 membrane-spanning stretches (helical) occupy residues 13 to 33, 84 to 104, 115 to 135, 161 to 181, 190 to 210, 248 to 268, 277 to 297, and 309 to 329; these read VLILAQVLAVIGFVMVSLLFL, FMLAPMTSFVLALLAWAVIPF, VAILFVFAISSLEVYGVIMGG, LGLIIIGVIISTGSMNFGGIV, FFSWYWLPHFPMVFLFFISCL, YIAIFLMCALTSLLFFGGWLS, VFWMIAKMAFFFFLFAMVKAI, and LGWKVFLPFSLVWVVFVAFAA.

Belongs to the complex I subunit 1 family. NDH-1 is composed of 14 different subunits. Subunits NuoA, H, J, K, L, M, N constitute the membrane sector of the complex.

It localises to the cell inner membrane. It carries out the reaction a quinone + NADH + 5 H(+)(in) = a quinol + NAD(+) + 4 H(+)(out). Functionally, NDH-1 shuttles electrons from NADH, via FMN and iron-sulfur (Fe-S) centers, to quinones in the respiratory chain. The immediate electron acceptor for the enzyme in this species is believed to be ubiquinone. Couples the redox reaction to proton translocation (for every two electrons transferred, four hydrogen ions are translocated across the cytoplasmic membrane), and thus conserves the redox energy in a proton gradient. This subunit may bind ubiquinone. The polypeptide is NADH-quinone oxidoreductase subunit H (Roseobacter denitrificans (strain ATCC 33942 / OCh 114) (Erythrobacter sp. (strain OCh 114))).